We begin with the raw amino-acid sequence, 247 residues long: tRNA pseudouridine synthase A (247 aa).

Aspartate 57 (nucleophile) is an active-site residue. Tyrosine 115 contacts substrate.

This sequence belongs to the tRNA pseudouridine synthase TruA family. As to quaternary structure, homodimer.

The catalysed reaction is uridine(38/39/40) in tRNA = pseudouridine(38/39/40) in tRNA. In terms of biological role, formation of pseudouridine at positions 38, 39 and 40 in the anticodon stem and loop of transfer RNAs. This chain is tRNA pseudouridine synthase A, found in Chlorobaculum tepidum (strain ATCC 49652 / DSM 12025 / NBRC 103806 / TLS) (Chlorobium tepidum).